A 179-amino-acid polypeptide reads, in one-letter code: Large ribosomal subunit protein uL5 (179 aa).

In terms of assembly, contacts the P site tRNA. Forms a bridge to the 30S subunit in the 70S ribosome. Part of the 50S ribosomal subunit. Part of the 5S rRNA/L5/L18 subcomplex; in this organism only 2 proteins, L5 and L18 have been shown to be part of the 5S rRNA subcomplex, unlike E.coli and T.thermophilus where L25 (TL5) is also found. Has been shown to bind 5S rRNA.

This is one of the proteins that bind and probably mediate the attachment of the 5S RNA into the large ribosomal subunit, where it forms part of the central protuberance. In the 70S ribosome it contacts protein S13 of the 30S subunit (bridge B1b), connecting the 2 subunits; this bridge is implicated in subunit movement. Contacts the P site tRNA; the 5S rRNA and some of its associated proteins might help stabilize positioning of ribosome-bound tRNAs. The chain is Large ribosomal subunit protein uL5 (rplE) from Geobacillus stearothermophilus (Bacillus stearothermophilus).